Reading from the N-terminus, the 186-residue chain is uncharacterized protein (186 aa).

The Macro domain occupies 1-181 (MVSFSYKGNL…TFVSLASDFL (181 aa)).

It belongs to the MacroD-type family.

This is an uncharacterized protein from Thermoplasma volcanium (strain ATCC 51530 / DSM 4299 / JCM 9571 / NBRC 15438 / GSS1).